The sequence spans 319 residues: Protein-methionine-sulfoxide reductase catalytic subunit MsrP (319 aa).

The segment at residues 1 to 54 (MSSFKPSRFSTARLTGDAVTPKSIYLRRREFMIGLGAIAATGAASSAFADPLEA) is a signal peptide (tat-type signal). Mo-molybdopterin contacts are provided by residues asparagine 75, 78–79 (YE), cysteine 133, asparagine 218, arginine 223, and 234–236 (GIK).

This sequence belongs to the MsrP family. As to quaternary structure, heterodimer of a catalytic subunit (MsrP) and a heme-binding subunit (MsrQ). Mo-molybdopterin serves as cofactor. In terms of processing, predicted to be exported by the Tat system. The position of the signal peptide cleavage has not been experimentally proven.

The protein localises to the periplasm. It carries out the reaction L-methionyl-[protein] + a quinone + H2O = L-methionyl-(S)-S-oxide-[protein] + a quinol. The catalysed reaction is L-methionyl-[protein] + a quinone + H2O = L-methionyl-(R)-S-oxide-[protein] + a quinol. In terms of biological role, part of the MsrPQ system that repairs oxidized periplasmic proteins containing methionine sulfoxide residues (Met-O), using respiratory chain electrons. Thus protects these proteins from oxidative-stress damage caused by reactive species of oxygen and chlorine generated by the host defense mechanisms. MsrPQ is essential for the maintenance of envelope integrity under bleach stress, rescuing a wide series of structurally unrelated periplasmic proteins from methionine oxidation. The catalytic subunit MsrP is non-stereospecific, being able to reduce both (R-) and (S-) diastereoisomers of methionine sulfoxide. The chain is Protein-methionine-sulfoxide reductase catalytic subunit MsrP from Brucella melitensis biotype 1 (strain ATCC 23456 / CCUG 17765 / NCTC 10094 / 16M).